The chain runs to 321 residues: Large ribosomal subunit protein uL10 (321 aa).

Positions 284–321 are disordered; that stretch reads SAGTAPTGGGAAAAAVEEKKEEPEEESDDDIGFSLFDD. A compositionally biased stretch (acidic residues) spans 306–321; the sequence is PEEESDDDIGFSLFDD.

It belongs to the universal ribosomal protein uL10 family. As to quaternary structure, P0 forms a pentameric complex by interaction with dimers of P1 and P2. In terms of processing, phosphorylated.

Functionally, ribosomal protein P0 is the functional equivalent of E.coli protein L10. This is Large ribosomal subunit protein uL10 from Oxybasis rubra (Red goosefoot).